Consider the following 284-residue polypeptide: MEMO1 family protein M1425_2054 (284 aa).

It belongs to the MEMO1 family.

This chain is MEMO1 family protein M1425_2054, found in Saccharolobus islandicus (strain M.14.25 / Kamchatka #1) (Sulfolobus islandicus).